The primary structure comprises 248 residues: Triosephosphate isomerase (248 aa).

Substrate is bound by residues Asn-12 and Lys-14. Residues 16 to 30 form an igE-binding region; that stretch reads NGDRAGIDSIISFMK. His-95 (electrophile) is an active-site residue. Catalysis depends on Glu-165, which acts as the Proton acceptor. IgE-binding regions lie at residues 166–180 and 205–219; these read PVWAIGTGKTATPEQ and RIIYGGSVTPGNCKE.

The protein belongs to the triosephosphate isomerase family. Homodimer. Expressed in skeletal muscle (at protein level).

The protein resides in the cytoplasm. The enzyme catalyses D-glyceraldehyde 3-phosphate = dihydroxyacetone phosphate. It carries out the reaction dihydroxyacetone phosphate = methylglyoxal + phosphate. It participates in carbohydrate biosynthesis; gluconeogenesis. It functions in the pathway carbohydrate degradation; glycolysis; D-glyceraldehyde 3-phosphate from glycerone phosphate: step 1/1. Its function is as follows. Triosephosphate isomerase is an extremely efficient metabolic enzyme that catalyzes the interconversion between dihydroxyacetone phosphate (DHAP) and D-glyceraldehyde-3-phosphate (G3P) in glycolysis and gluconeogenesis. It is also responsible for the non-negligible production of methylglyoxal a reactive cytotoxic side-product that modifies and can alter proteins, DNA and lipids. This is Triosephosphate isomerase from Procambarus clarkii (Red swamp crayfish).